Here is a 218-residue protein sequence, read N- to C-terminus: MLKGLTSKADARLKPALPGFTNVYRYWDARFAKVAVKLQPGECYVTKNDEMLVTVLGSCIAACIRDPVAGVGGMNHFMLPEQAAGHEITRNSLSNPELCYGNWAMEHLINSIIKCGGMRNRLEIKLFGGGRVLANMVRMDIGQRNIEFVESFLANDELPVIAKDLGGNYPRKILYFAATGQAKMKKMGIASDTNLVKQEKAYLDSLATKPSAGDVELF.

Belongs to the CheD family.

It carries out the reaction L-glutaminyl-[protein] + H2O = L-glutamyl-[protein] + NH4(+). Functionally, probably deamidates glutamine residues to glutamate on methyl-accepting chemotaxis receptors (MCPs), playing an important role in chemotaxis. In Saccharophagus degradans (strain 2-40 / ATCC 43961 / DSM 17024), this protein is Probable chemoreceptor glutamine deamidase CheD.